The primary structure comprises 193 residues: Phosphoheptose isomerase (193 aa).

Residues 37–193 (IAQSFKNEKK…LIIEKEMQKN (157 aa)) enclose the SIS domain. Position 52–54 (52–54 (NGG)) interacts with substrate. Zn(2+) is bound by residues histidine 61 and glutamate 65. Substrate-binding positions include glutamate 65, 93 to 94 (ND), 119 to 121 (STS), serine 124, and glutamine 172. Zn(2+)-binding residues include glutamine 172 and histidine 180.

Belongs to the SIS family. GmhA subfamily. Homotetramer. Requires Zn(2+) as cofactor.

It is found in the cytoplasm. The enzyme catalyses 2 D-sedoheptulose 7-phosphate = D-glycero-alpha-D-manno-heptose 7-phosphate + D-glycero-beta-D-manno-heptose 7-phosphate. Its pathway is carbohydrate biosynthesis; D-glycero-D-manno-heptose 7-phosphate biosynthesis; D-glycero-alpha-D-manno-heptose 7-phosphate and D-glycero-beta-D-manno-heptose 7-phosphate from sedoheptulose 7-phosphate: step 1/1. In terms of biological role, catalyzes the isomerization of sedoheptulose 7-phosphate in D-glycero-D-manno-heptose 7-phosphate. The sequence is that of Phosphoheptose isomerase from Buchnera aphidicola subsp. Acyrthosiphon pisum (strain 5A).